Here is a 591-residue protein sequence, read N- to C-terminus: Splicing factor U2af large subunit A (591 aa).

A disordered region spans residues 1-215; it reads MAEHDAPPES…QSKRMSGFDQ (215 aa). Over residues 27–36 the composition is skewed to polar residues; it reads SPQQDAQPLS. Basic and acidic residues-rich tracts occupy residues 37–79 and 157–191; these read SRDR…SRDR and RERSERREHRDRSDDRDYRRSCDRDAERRDRDRDG. 2 consecutive RRM domains span residues 272–355 and 392–470; these read RRVY…RPTD and DRIF…RANQ.

Belongs to the splicing factor SR family.

Its subcellular location is the nucleus. Necessary for the splicing of pre-mRNA. This Triticum aestivum (Wheat) protein is Splicing factor U2af large subunit A (U2AF65A).